Here is a 186-residue protein sequence, read N- to C-terminus: Homeobox expressed in ES cells 1 (186 aa).

Residues 109–168 (GRRPRTAFTRSQIEILENVFRVNSYPGIDIREELAGKLALDEDRIQIWFQNRRAKLKRSH) constitute a DNA-binding region (homeobox).

Belongs to the ANF homeobox family. In terms of assembly, interacts (via N-terminus) with zyx.

The protein resides in the nucleus. In terms of biological role, regulates the earliest stages of development of the anterior neural plate. Plays a role in forebrain development by inhibiting the expression of otx2 and pax6 in the rostral region of the anterior neural plate. Necessary for both neural differentiation and neural patterning. Controls Spemann organizer development. May act as a transcriptional repressor. This is Homeobox expressed in ES cells 1 from Xenopus tropicalis (Western clawed frog).